The chain runs to 801 residues: Probable phosphoketolase (801 aa).

The protein belongs to the XFP family. Thiamine diphosphate serves as cofactor.

The sequence is that of Probable phosphoketolase from Bradyrhizobium diazoefficiens (strain JCM 10833 / BCRC 13528 / IAM 13628 / NBRC 14792 / USDA 110).